A 126-amino-acid polypeptide reads, in one-letter code: Small ribosomal subunit protein uS12 (126 aa).

A disordered region spans residues 1 to 28; the sequence is MPTINQLVRKGRQSETTKSKSPALQDCP. Residue Asp-89 is modified to 3-methylthioaspartic acid. The disordered stretch occupies residues 103–126; the sequence is DTQGVKDRKQARSKYGAKRAKAGK. The span at 113 to 126 shows a compositional bias: basic residues; that stretch reads ARSKYGAKRAKAGK.

It belongs to the universal ribosomal protein uS12 family. As to quaternary structure, part of the 30S ribosomal subunit. Contacts proteins S8 and S17. May interact with IF1 in the 30S initiation complex.

In terms of biological role, with S4 and S5 plays an important role in translational accuracy. Functionally, interacts with and stabilizes bases of the 16S rRNA that are involved in tRNA selection in the A site and with the mRNA backbone. Located at the interface of the 30S and 50S subunits, it traverses the body of the 30S subunit contacting proteins on the other side and probably holding the rRNA structure together. The combined cluster of proteins S8, S12 and S17 appears to hold together the shoulder and platform of the 30S subunit. In Paraburkholderia phytofirmans (strain DSM 17436 / LMG 22146 / PsJN) (Burkholderia phytofirmans), this protein is Small ribosomal subunit protein uS12.